Reading from the N-terminus, the 63-residue chain is Sperm protamine P1 (63 aa).

The disordered stretch occupies residues 1–63; sequence MARYRRHSRS…RYSRRGRRRY (63 aa).

It belongs to the protamine P1 family. As to expression, testis.

It localises to the nucleus. The protein resides in the chromosome. In terms of biological role, protamines substitute for histones in the chromatin of sperm during the haploid phase of spermatogenesis. They compact sperm DNA into a highly condensed, stable and inactive complex. This Sminthopsis bindi (Kakadu dunnart) protein is Sperm protamine P1 (PRM1).